The sequence spans 212 residues: NEDD4 family-interacting protein 1 (212 aa).

Polar residues predominate over residues 1–14; that stretch reads MSEQSSSSRYQQLQ. The segment at 1–40 is disordered; sequence MSEQSSSSRYQQLQNEEEPGENAQASADAPPPYSSIAGES. Topologically, residues 1-107 are cytoplasmic; it reads MSEQSSSSRY…ADQLRIGNDG (107 aa). 2 short sequence motifs (PPxY motif) span residues 30 to 33 and 55 to 58; these read PPPY and PPSY. A helical transmembrane segment spans residues 108-128; that stretch reads IFMLTFFMAFLFNWIGFFLSF. Over 129-134 the chain is Extracellular; the sequence is CLTSSA. Residues 135–155 traverse the membrane as a helical segment; it reads AGRYGAISGFGLSLIKWILIV. At 156 to 163 the chain is on the cytoplasmic side; it reads RFSTYFPG. Residues 164-184 traverse the membrane as a helical segment; it reads YFDGQYWLWWVFLVLGFLLFL. Residues 185-212 lie on the Extracellular side of the membrane; sequence RGFINYAKVRKMPDNFSTLPRTRVLFIY.

The protein resides in the golgi apparatus membrane. May play a role in Golgi structure maintenance. In Xenopus laevis (African clawed frog), this protein is NEDD4 family-interacting protein 1 (ndfip1).